The chain runs to 297 residues: Protease HtpX homolog (297 aa).

A run of 2 helical transmembrane segments spans residues 5–25 (IFLFLLSNILVITTIGIVLSI) and 44–64 (IVALLVFSAVVGFVGSFMSLL). Position 155 (His155) interacts with Zn(2+). Glu156 is a catalytic residue. Position 159 (His159) interacts with Zn(2+). A run of 2 helical transmembrane segments spans residues 170-190 (LLQGIVNTFVVFFARIAAWAV) and 204-224 (FIAVIVFQIVFSILGSLVVFA). Glu230 contacts Zn(2+).

This sequence belongs to the peptidase M48B family. Zn(2+) serves as cofactor.

The protein localises to the cell membrane. This chain is Protease HtpX homolog, found in Bacillus licheniformis (strain ATCC 14580 / DSM 13 / JCM 2505 / CCUG 7422 / NBRC 12200 / NCIMB 9375 / NCTC 10341 / NRRL NRS-1264 / Gibson 46).